The sequence spans 282 residues: Bis(5'-nucleosyl)-tetraphosphatase, symmetrical (282 aa).

This sequence belongs to the Ap4A hydrolase family.

The catalysed reaction is P(1),P(4)-bis(5'-adenosyl) tetraphosphate + H2O = 2 ADP + 2 H(+). Functionally, hydrolyzes diadenosine 5',5'''-P1,P4-tetraphosphate to yield ADP. The polypeptide is Bis(5'-nucleosyl)-tetraphosphatase, symmetrical (Escherichia coli O127:H6 (strain E2348/69 / EPEC)).